The following is a 326-amino-acid chain: Beta-ketoacyl-[acyl-carrier-protein] synthase III (326 aa).

Catalysis depends on residues cysteine 120 and histidine 253. The ACP-binding stretch occupies residues 254–258 (QANIR). The active site involves asparagine 283.

It belongs to the thiolase-like superfamily. FabH family. In terms of assembly, homodimer.

The protein resides in the cytoplasm. The enzyme catalyses malonyl-[ACP] + acetyl-CoA + H(+) = 3-oxobutanoyl-[ACP] + CO2 + CoA. Its pathway is lipid metabolism; fatty acid biosynthesis. Functionally, catalyzes the condensation reaction of fatty acid synthesis by the addition to an acyl acceptor of two carbons from malonyl-ACP. Catalyzes the first condensation reaction which initiates fatty acid synthesis and may therefore play a role in governing the total rate of fatty acid production. Possesses both acetoacetyl-ACP synthase and acetyl transacylase activities. Its substrate specificity determines the biosynthesis of branched-chain and/or straight-chain of fatty acids. The protein is Beta-ketoacyl-[acyl-carrier-protein] synthase III of Cupriavidus necator (strain ATCC 17699 / DSM 428 / KCTC 22496 / NCIMB 10442 / H16 / Stanier 337) (Ralstonia eutropha).